The sequence spans 247 residues: MQTQVLFEHPLNEKMRTWLRIEFLIQQLTVNLPIVDHAGALHFFRNVSELLDVFERGEVRTELLKELDRQQRKLQTWIGVPGVDQSRIEALIQQLKAAGSVLISAPRIGQFLREDRLIALVRQRLSIPGGCCSFDLPTLHIWLHLPQAQRDSQVETWIASLNPLTQALTMVLDLIRQSAPFRKQTSLNGFYQDNGGDADLLRLNLSLDSQLYPQISGHKSRFAIRFMPLDSENGQVPERLNFELACC.

The protein belongs to the ZapD family. In terms of assembly, interacts with FtsZ.

It localises to the cytoplasm. Its function is as follows. Cell division factor that enhances FtsZ-ring assembly. Directly interacts with FtsZ and promotes bundling of FtsZ protofilaments, with a reduction in FtsZ GTPase activity. This Shigella boydii serotype 4 (strain Sb227) protein is Cell division protein ZapD.